We begin with the raw amino-acid sequence, 56 residues long: Small ribosomal subunit protein uS14 (56 aa).

Zn(2+) contacts are provided by cysteine 21, cysteine 24, cysteine 39, and cysteine 42.

The protein belongs to the universal ribosomal protein uS14 family. Component of the 40S small ribosomal subunit. Zn(2+) serves as cofactor.

The protein resides in the cytoplasm. Its subcellular location is the cytosol. It localises to the rough endoplasmic reticulum. The sequence is that of Small ribosomal subunit protein uS14 (RpS29) from Spodoptera frugiperda (Fall armyworm).